The following is a 318-amino-acid chain: Protease HtpX homolog (318 aa).

The next 3 membrane-spanning stretches (helical) occupy residues 1-21 (MLEA…VGRL), 35-55 (ILGL…GSAI), and 56-76 (AGLV…SRIV). Residue His-167 participates in Zn(2+) binding. Glu-168 is a catalytic residue. His-171 serves as a coordination point for Zn(2+). The next 2 helical transmembrane spans lie at 178–198 (LVMT…DPWL) and 209–229 (IAFL…LVAA). Position 235 (Glu-235) interacts with Zn(2+).

Belongs to the peptidase M48B family. Requires Zn(2+) as cofactor.

The protein localises to the cell membrane. In Methanopyrus kandleri (strain AV19 / DSM 6324 / JCM 9639 / NBRC 100938), this protein is Protease HtpX homolog.